We begin with the raw amino-acid sequence, 1451 residues long: Dual 3',5'-cyclic-AMP and -GMP phosphodiesterase 11 (1451 aa).

Disordered stretches follow at residues 1 to 54 (MGQA…PQIQ), 75 to 100 (ATTPLQFQPTGRMNTEQGGTGYGGYG), 125 to 169 (LPAH…QVQQ), 235 to 262 (GNDVVSSTSPTHANGQTSSSRGGSGATT), and 327 to 374 (QHHH…GSGG). Basic residues predominate over residues 11 to 21 (RGCRYKNKNKS). Low complexity predominate over residues 24–45 (QQQQQQQQQQQQQQQHQQQQQQ). The span at 77–91 (TPLQFQPTGRMNTEQ) shows a compositional bias: polar residues. Composition is skewed to low complexity over residues 135 to 147 (SGAAPPSSSNGSS) and 160 to 169 (QQQQQYQVQQ). The span at 235–248 (GNDVVSSTSPTHAN) shows a compositional bias: polar residues. Residues 327–340 (QHHHNHAHLHHSQH) are compositionally biased toward basic residues. Residues 341–355 (SHYQAGGAVGSSSLG) are compositionally biased toward low complexity. Residues 356–374 (STGGASGAGGAPSLGGSGG) show a composition bias toward gly residues. 2 GAF domains span residues 419-572 (EVRT…GIGL) and 604-754 (TIEH…GMGI). The region spanning 783–1107 (ATMDEAHRLR…GHWIDLADVV (325 aa)) is the PDEase domain. The Proton donor role is filled by H860. The a divalent metal cation site is built by H864, H900, D901, and D1011. 4 disordered regions span residues 1109-1171 (TKTS…SNTN), 1200-1248 (DEQA…TPVS), 1268-1305 (QTSNQAQTQKQRCKSCDHSRSGLQVRKTSSLRGAQELD), and 1325-1364 (INNHSHHHNHSHSHNHNHHHHHHHHSHHNHSQHGIGIGSA). Low complexity-rich tracts occupy residues 1142-1171 (ASEAEVAVDSPSEKASVNGSNVANNSSNTN) and 1218-1234 (CRSNSTCSSSTASSCLS). Over residues 1268–1277 (QTSNQAQTQK) the composition is skewed to polar residues. Residues 1328–1355 (HSHHHNHSHSHNHNHHHHHHHHSHHNHS) show a composition bias toward basic residues.

It belongs to the cyclic nucleotide phosphodiesterase family. It depends on a divalent metal cation as a cofactor. In terms of tissue distribution, in adults, it is enriched in Malpighian tubules.

The catalysed reaction is 3',5'-cyclic GMP + H2O = GMP + H(+). The enzyme catalyses 3',5'-cyclic AMP + H2O = AMP + H(+). Functionally, plays a role in signal transduction by regulating the intracellular concentration of cyclic nucleotides cAMP and cGMP. Dual-specificity phosphodiesterase that catalyzes the hydrolysis of both cAMP and cGMP to 5'-AMP and 5'-GMP, respectively. This chain is Dual 3',5'-cyclic-AMP and -GMP phosphodiesterase 11 (Pde11), found in Drosophila melanogaster (Fruit fly).